The chain runs to 562 residues: Ycf55-like protein (562 aa).

The 119-residue stretch at 7–125 folds into the Response regulatory domain; it reads TIVIVDEDPV…DLVTGLKQVH (119 aa).

The protein belongs to the ycf55 family.

This Synechocystis sp. (strain ATCC 27184 / PCC 6803 / Kazusa) protein is Ycf55-like protein.